The chain runs to 464 residues: NADH-ubiquinone oxidoreductase chain 4 (464 aa).

13 consecutive transmembrane segments (helical) span residues 18-38 (LLPT…VLPT), 54-74 (IADI…IANW), 79-99 (SLLY…NFMC), 102-122 (MLSF…LIGL), 131-151 (AADY…LAIG), 168-188 (VVLS…GIMV), 207-227 (PLAG…YAII), 239-259 (VLYT…TSII), 266-286 (LKVI…LGIL), 297-317 (LILS…VGGI), 332-352 (GLLT…FSNI), 375-395 (TILG…MLKV), and 420-440 (LLMI…NGII).

This sequence belongs to the complex I subunit 4 family.

The protein localises to the mitochondrion membrane. The catalysed reaction is a ubiquinone + NADH + 5 H(+)(in) = a ubiquinol + NAD(+) + 4 H(+)(out). Core subunit of the mitochondrial membrane respiratory chain NADH dehydrogenase (Complex I) that is believed to belong to the minimal assembly required for catalysis. Complex I functions in the transfer of electrons from NADH to the respiratory chain. The immediate electron acceptor for the enzyme is believed to be ubiquinone. This chain is NADH-ubiquinone oxidoreductase chain 4 (NAD4), found in Candida albicans (strain SC5314 / ATCC MYA-2876) (Yeast).